The sequence spans 238 residues: Sugar fermentation stimulation protein homolog (238 aa).

The protein belongs to the SfsA family.

In Klebsiella pneumoniae subsp. pneumoniae (strain ATCC 700721 / MGH 78578), this protein is Sugar fermentation stimulation protein homolog.